The primary structure comprises 535 residues: Calcium-dependent protein kinase 5 (535 aa).

The disordered stretch occupies residues 1-46; it reads MGNACRGSFGGKTFQGYPQPQDHSESNSNPKHNSDSPKPKKEQQPL. Gly2 carries the N-myristoyl glycine lipid modification. Cys5 is lipidated: S-palmitoyl cysteine. The span at 32-43 shows a compositional bias: basic and acidic residues; sequence HNSDSPKPKKEQ. In terms of domain architecture, Protein kinase spans 72–330; sequence YTLGRKLGQG…AHEVLCHPWI (259 aa). Residues 78–86 and Lys101 each bind ATP; that span reads LGQGQFGTT. The Proton acceptor role is filled by Asp196. Residues 336–366 are autoinhibitory domain; it reads APDRALDPAVLSRLKHFSAMNKLKKMALRVI. 4 EF-hand domains span residues 373 to 408, 409 to 444, 445 to 480, and 484 to 514; these read EEIA…YGST, LKDI…LNKL, DREE…HNIT, and FEDI…GNPC. Ca(2+)-binding residues include Asp386, Asp388, Ser390, Glu397, Asp422, Asp424, Ser426, Thr428, Glu433, Asp458, Asp460, Ser462, Tyr464, Glu469, Asp492, Asp494, Asp496, Arg498, and Glu503.

The protein belongs to the protein kinase superfamily. Ser/Thr protein kinase family. CDPK subfamily.

It localises to the cell membrane. The catalysed reaction is L-seryl-[protein] + ATP = O-phospho-L-seryl-[protein] + ADP + H(+). The enzyme catalyses L-threonyl-[protein] + ATP = O-phospho-L-threonyl-[protein] + ADP + H(+). Activated by calcium. Autophosphorylation may play an important role in the regulation of the kinase activity. Regulates the production of reactive oxygen species (ROS) by NADPH oxidase. In Solanum tuberosum (Potato), this protein is Calcium-dependent protein kinase 5 (CPK5).